Here is a 348-residue protein sequence, read N- to C-terminus: Nicotinate-nucleotide--dimethylbenzimidazole phosphoribosyltransferase (348 aa).

E315 functions as the Proton acceptor in the catalytic mechanism.

Belongs to the CobT family.

It carries out the reaction 5,6-dimethylbenzimidazole + nicotinate beta-D-ribonucleotide = alpha-ribazole 5'-phosphate + nicotinate + H(+). The protein operates within nucleoside biosynthesis; alpha-ribazole biosynthesis; alpha-ribazole from 5,6-dimethylbenzimidazole: step 1/2. Catalyzes the synthesis of alpha-ribazole-5'-phosphate from nicotinate mononucleotide (NAMN) and 5,6-dimethylbenzimidazole (DMB). This is Nicotinate-nucleotide--dimethylbenzimidazole phosphoribosyltransferase from Dechloromonas aromatica (strain RCB).